A 321-amino-acid polypeptide reads, in one-letter code: Glucokinase (321 aa).

8 to 13 (GDVGGT) is a binding site for ATP.

The protein belongs to the bacterial glucokinase family.

The protein localises to the cytoplasm. It carries out the reaction D-glucose + ATP = D-glucose 6-phosphate + ADP + H(+). The polypeptide is Glucokinase (Shigella boydii serotype 18 (strain CDC 3083-94 / BS512)).